Here is a 137-residue protein sequence, read N- to C-terminus: Small ribosomal subunit protein eS19 (137 aa).

The protein belongs to the eukaryotic ribosomal protein eS19 family. Component of the small ribosomal subunit.

The protein resides in the cytoplasm. This is Small ribosomal subunit protein eS19 (RPS19) from Encephalitozoon cuniculi (strain GB-M1) (Microsporidian parasite).